A 137-amino-acid polypeptide reads, in one-letter code: Protein archease (137 aa).

Positions 11, 136, and 137 each coordinate Ca(2+).

The protein belongs to the archease family.

Its function is as follows. Activates the tRNA-splicing ligase complex by facilitating the enzymatic turnover of catalytic subunit RtcB. Acts by promoting the guanylylation of RtcB, a key intermediate step in tRNA ligation. Can also alter the NTP specificity of RtcB such that ATP, dGTP or ITP is used efficiently. The sequence is that of Protein archease from Archaeoglobus fulgidus (strain ATCC 49558 / DSM 4304 / JCM 9628 / NBRC 100126 / VC-16).